Reading from the N-terminus, the 58-residue chain is MDISNQLTLEQEFELVLYKQKIDPLNLEQAQNLLVETLKTMMLKDNIIKYVVKNSHFR.

This sequence belongs to the ycf18/nblA family.

It localises to the plastid. The protein localises to the chloroplast. This is an uncharacterized protein from Porphyra purpurea (Red seaweed).